The following is a 342-amino-acid chain: Pre-mRNA-splicing factor 18 (342 aa).

An N-acetylmethionine modification is found at methionine 1.

The protein belongs to the PRP18 family. Heterodimer with PPIH. Interacts with PRPF4 and with the spliceosome. Part of a complex containing U4/U6 snRNPs.

It is found in the nucleus speckle. Functionally, participates in the second step of pre-mRNA splicing. This is Pre-mRNA-splicing factor 18 (Prpf18) from Mus musculus (Mouse).